Here is a 114-residue protein sequence, read N- to C-terminus: DNA-directed RNA polymerase subunit omega (114 aa).

The protein belongs to the RNA polymerase subunit omega family. In terms of assembly, the RNAP catalytic core consists of 2 alpha, 1 beta, 1 beta' and 1 omega subunit. When a sigma factor is associated with the core the holoenzyme is formed, which can initiate transcription.

It catalyses the reaction RNA(n) + a ribonucleoside 5'-triphosphate = RNA(n+1) + diphosphate. In terms of biological role, promotes RNA polymerase assembly. Latches the N- and C-terminal regions of the beta' subunit thereby facilitating its interaction with the beta and alpha subunits. This Novosphingobium aromaticivorans (strain ATCC 700278 / DSM 12444 / CCUG 56034 / CIP 105152 / NBRC 16084 / F199) protein is DNA-directed RNA polymerase subunit omega.